We begin with the raw amino-acid sequence, 295 residues long: Transcriptional regulator SirC (295 aa).

One can recognise an HTH araC/xylS-type domain in the interval 195 to 292; sequence EKVYNIIISD…KITPLSFMRT (98 aa). 2 consecutive DNA-binding regions (H-T-H motif) follow at residues 212–233 and 259–282; these read AEVA…AAEE and ISQV…KRHF.

In terms of biological role, positive regulator of the expression of the invasion-associated type III secretion system encoded within SPI-1 (pathogenicity island 1). The sequence is that of Transcriptional regulator SirC (sirC) from Salmonella typhimurium (strain SL1344).